We begin with the raw amino-acid sequence, 433 residues long: GTPase Der (433 aa).

EngA-type G domains follow at residues 3 to 167 and 174 to 349; these read NIVA…QDTI and PKIA…TNKT. Residues 9–16, 56–60, 119–122, 180–187, 227–231, and 292–295 each bind GTP; these read GRPNVGKS, DTGGY, NKAD, DTAGI, and NKWD. A KH-like domain is found at 350 to 433; sequence QKISTAALNQ…VPVQLVFRKK (84 aa).

Belongs to the TRAFAC class TrmE-Era-EngA-EngB-Septin-like GTPase superfamily. EngA (Der) GTPase family. Associates with the 50S ribosomal subunit.

Functionally, GTPase that plays an essential role in the late steps of ribosome biogenesis. This Amoebophilus asiaticus (strain 5a2) protein is GTPase Der.